Consider the following 343-residue polypeptide: 4-hydroxy-2-oxovalerate aldolase (343 aa).

Residues 4 to 254 (PRLTDTTLRD…NPGLDVFGLM (251 aa)) enclose the Pyruvate carboxyltransferase domain. 12–13 (RD) is a binding site for substrate. Asp13 contributes to the Mn(2+) binding site. The Proton acceptor role is filled by His16. Residues Ser166 and His193 each contribute to the substrate site. Mn(2+) is bound by residues His193 and His195. Tyr284 contributes to the substrate binding site.

Belongs to the 4-hydroxy-2-oxovalerate aldolase family.

The catalysed reaction is (S)-4-hydroxy-2-oxopentanoate = acetaldehyde + pyruvate. The protein is 4-hydroxy-2-oxovalerate aldolase of Chloroflexus aggregans (strain MD-66 / DSM 9485).